Reading from the N-terminus, the 407-residue chain is MNNSVREPTRGRRGSPPVADAALSVNPPLSVVLAGGGTAGHVEPAMAVADALRALDPQVRITALGTSRGLETRLVPERGYHLELITPVPLPRKLTGDLARLPLRVWRAVRETRAVFEVVEAHVVVGFGGYVALPAYLAARGIPRVRRRIPVVVHEANARAGIANRVGVRTAERVLSAVPGSGLRGAEVVGVPIHATITTLNRPALRADARKHFGFTDDARVLLVFGGSQGAVSLNRAVAGAAEDLAASGVAVLHAYGLKNTLELRTPEYGEPPYVAVPYLDRMDLAYAAADLVICRSGAMTVAEVSAVGLPAIYVPFPIGNGEQRLNALPVVNAGGGLVVADADLTPGLVARQVVRLFSDPAQLAAMTAAAARVGHRDAAHHVAKVALDLARAERDTASGRSAGGKP.

The interval 1–21 (MNNSVREPTRGRRGSPPVADA) is disordered. UDP-N-acetyl-alpha-D-glucosamine-binding positions include 38-40 (TAG), Asn157, Ser228, and Gln324.

Belongs to the glycosyltransferase 28 family. MurG subfamily.

It localises to the cell membrane. The enzyme catalyses di-trans,octa-cis-undecaprenyl diphospho-N-acetyl-alpha-D-muramoyl-L-alanyl-D-glutamyl-meso-2,6-diaminopimeloyl-D-alanyl-D-alanine + UDP-N-acetyl-alpha-D-glucosamine = di-trans,octa-cis-undecaprenyl diphospho-[N-acetyl-alpha-D-glucosaminyl-(1-&gt;4)]-N-acetyl-alpha-D-muramoyl-L-alanyl-D-glutamyl-meso-2,6-diaminopimeloyl-D-alanyl-D-alanine + UDP + H(+). The protein operates within cell wall biogenesis; peptidoglycan biosynthesis. Cell wall formation. Catalyzes the transfer of a GlcNAc subunit on undecaprenyl-pyrophosphoryl-MurNAc-pentapeptide (lipid intermediate I) to form undecaprenyl-pyrophosphoryl-MurNAc-(pentapeptide)GlcNAc (lipid intermediate II). The chain is UDP-N-acetylglucosamine--N-acetylmuramyl-(pentapeptide) pyrophosphoryl-undecaprenol N-acetylglucosamine transferase from Mycobacterium leprae (strain TN).